The chain runs to 104 residues: Large ribosomal subunit protein uL24 (104 aa).

This sequence belongs to the universal ribosomal protein uL24 family. Part of the 50S ribosomal subunit.

One of two assembly initiator proteins, it binds directly to the 5'-end of the 23S rRNA, where it nucleates assembly of the 50S subunit. Its function is as follows. One of the proteins that surrounds the polypeptide exit tunnel on the outside of the subunit. The protein is Large ribosomal subunit protein uL24 of Pseudomonas aeruginosa (strain LESB58).